The sequence spans 1138 residues: Nuclear pore complex-interacting protein family member B4 (1138 aa).

Residues 63 to 87 (VIIAFPTSYKVVITLWIVYLWVSLL) traverse the membrane as a helical segment. Disordered regions lie at residues 241-263 (NRMGHQPPPPTQQHSITDNSLSL), 291-620 (TPLP…NIKT), and 873-1138 (ERLR…RRLS). A compositionally biased stretch (polar residues) spans 252 to 262 (QQHSITDNSLS). Residues 349–359 (PLPPSALPSAP) show a composition bias toward pro residues. Basic and acidic residues-rich tracts occupy residues 406-416 (DNIKTPAERLR), 448-458 (DNIKTPAERLR), 490-500 (DNIKTPAERLR), 532-542 (DNIKTPAERLR), 574-584 (DNIKTPAERLR), 908-918 (DNIKTPAERLR), 950-960 (DNIKTPAERLR), and 992-1002 (DNIKTPAERLR).

This sequence belongs to the NPIP family.

It localises to the membrane. The polypeptide is Nuclear pore complex-interacting protein family member B4 (NPIPB4) (Homo sapiens (Human)).